A 173-amino-acid chain; its full sequence is Development-specific protein S (173 aa).

Beta/gamma crystallin 'Greek key' domains are found at residues Ala2–Pro46 and Val48–Ser86. Ca(2+) contacts are provided by Tyr8, Asn37, Thr38, Ser40, Gln54, Asn77, Asn78, and Ser80. Residues Val87 to Gln90 form a connecting peptide region. Beta/gamma crystallin 'Greek key' domains follow at residues Pro91 to Gly135 and Leu136 to Ser173.

It belongs to the beta/gamma-crystallin family.

Its function is as follows. Protein S, induced in large amounts during fruiting body formation, assembles on the surface of myxospores in the presence of calcium ions. This is Development-specific protein S (tps) from Myxococcus xanthus.